A 242-amino-acid chain; its full sequence is Type III pantothenate kinase (242 aa).

Position 6 to 13 (6 to 13 (DIGNSVAK)) interacts with ATP. Residues Y86 and 93-96 (GMDR) contribute to the substrate site. D95 functions as the Proton acceptor in the catalytic mechanism. D116 provides a ligand contact to K(+). Residue T119 participates in ATP binding. T171 contacts substrate.

Belongs to the type III pantothenate kinase family. In terms of assembly, homodimer. It depends on NH4(+) as a cofactor. K(+) serves as cofactor.

It localises to the cytoplasm. It carries out the reaction (R)-pantothenate + ATP = (R)-4'-phosphopantothenate + ADP + H(+). It functions in the pathway cofactor biosynthesis; coenzyme A biosynthesis; CoA from (R)-pantothenate: step 1/5. Functionally, catalyzes the phosphorylation of pantothenate (Pan), the first step in CoA biosynthesis. The polypeptide is Type III pantothenate kinase (Phocaeicola vulgatus (strain ATCC 8482 / DSM 1447 / JCM 5826 / CCUG 4940 / NBRC 14291 / NCTC 11154) (Bacteroides vulgatus)).